A 37-amino-acid chain; its full sequence is Large ribosomal subunit protein bL36B (37 aa).

This sequence belongs to the bacterial ribosomal protein bL36 family.

The sequence is that of Large ribosomal subunit protein bL36B from Aeromonas salmonicida (strain A449).